The chain runs to 204 residues: Large ribosomal subunit protein mL67 (204 aa).

Belongs to the mitochondrion-specific ribosomal protein mL67 family.

The protein resides in the nucleus. It localises to the mitochondrion. Transcription factor involved in regulation of RNA polymerase II-dependent transcription. Also involved in regulation of mitochondrial DNA recombination, maintenance and repair, and generation of homoplasmic cells. The chain is Large ribosomal subunit protein mL67 (MHR1) from Yarrowia lipolytica (strain CLIB 122 / E 150) (Yeast).